The primary structure comprises 95 residues: Small ribosomal subunit protein bS6 (95 aa).

The protein belongs to the bacterial ribosomal protein bS6 family.

Functionally, binds together with bS18 to 16S ribosomal RNA. The sequence is that of Small ribosomal subunit protein bS6 from Oceanobacillus iheyensis (strain DSM 14371 / CIP 107618 / JCM 11309 / KCTC 3954 / HTE831).